We begin with the raw amino-acid sequence, 150 residues long: 3-hydroxyacyl-[acyl-carrier-protein] dehydratase FabZ (150 aa).

The active site involves His-57.

The protein belongs to the thioester dehydratase family. FabZ subfamily.

It is found in the cytoplasm. The enzyme catalyses a (3R)-hydroxyacyl-[ACP] = a (2E)-enoyl-[ACP] + H2O. Its function is as follows. Involved in unsaturated fatty acids biosynthesis. Catalyzes the dehydration of short chain beta-hydroxyacyl-ACPs and long chain saturated and unsaturated beta-hydroxyacyl-ACPs. In Mannheimia succiniciproducens (strain KCTC 0769BP / MBEL55E), this protein is 3-hydroxyacyl-[acyl-carrier-protein] dehydratase FabZ.